We begin with the raw amino-acid sequence, 105 residues long: Large ribosomal subunit protein uL24 (105 aa).

Belongs to the universal ribosomal protein uL24 family. As to quaternary structure, part of the 50S ribosomal subunit.

Its function is as follows. One of two assembly initiator proteins, it binds directly to the 5'-end of the 23S rRNA, where it nucleates assembly of the 50S subunit. One of the proteins that surrounds the polypeptide exit tunnel on the outside of the subunit. This chain is Large ribosomal subunit protein uL24, found in Francisella tularensis subsp. novicida (strain U112).